Consider the following 687-residue polypeptide: Homeobox-leucine zipper protein HDG12 (687 aa).

The segment at 1–32 is disordered; that stretch reads MEFLGDSQNHDSSETEKKNKKKKRFHRHTPHQ. Over residues 8–17 the composition is skewed to basic and acidic residues; sequence QNHDSSETEK. Basic residues predominate over residues 18–30; that stretch reads KNKKKKRFHRHTP. A DNA-binding region (homeobox) is located at residues 21 to 80; sequence KKKRFHRHTPHQIQRLESTFNECQHPDEKQRNQLSRELGLAPRQIKFWFQNRRTQKKAQH. Positions 87-150 form a coiled coil; that stretch reads ALKEENDKIR…LERVSSIAAK (64 aa). The 235-residue stretch at 206–440 folds into the START domain; sequence SEMDKSLMTN…LQRMCERFTN (235 aa).

This sequence belongs to the HD-ZIP homeobox family. Class IV subfamily. Interacts with BBM. Expressed in apical meristems and young epidermal tissue including trichomes and stipules. Expressed in lateral root tips, the L1 layer of apical inflorescence meristems and early flower primordia, carpel and stamen filament epidermis, stigma papillae, ovule primordia, nucellus and embryo.

The protein resides in the nucleus. Probable transcription factor that acts as a negative regulator of trichome branching in association with HDG11. Seems to promote cell differentiation. May regulate cell differentiation and proliferation during root and shoot meristem development. Acts as a positive regulator of SCL18/LAS expression. Involved, together with PDF2, in the regulation of flower organs development by promoting the expression of APETALA 3 (AP3) in the epidermis and internal cell layers of developing flowers. In Arabidopsis thaliana (Mouse-ear cress), this protein is Homeobox-leucine zipper protein HDG12.